The sequence spans 676 residues: Nicastrin (676 aa).

An N-terminal signal peptide occupies residues 1-28 (MAMGLIRLLSIAFTLVLLSILPLHLSLA). At 29–644 (DEITSIESVP…VYTVQHSAYD (616 aa)) the chain is on the extracellular side. 7 N-linked (GlcNAc...) asparagine glycosylation sites follow: N58, N336, N371, N444, N480, N555, and N611. Residues 645-665 (NAVLVAGITVTTLAYIGILAA) traverse the membrane as a helical segment. Over 666–676 (KSIITKALKQD) the chain is Cytoplasmic.

It belongs to the nicastrin family. In terms of assembly, probable component of the gamma-secretase complex, a complex composed of a presenilin homodimer, nicastrin, APH1 and PEN2.

The protein localises to the membrane. Functionally, probable subunit of the gamma-secretase complex, an endoprotease complex that catalyzes the intramembrane cleavage of integral membrane proteins such as Notch. This chain is Nicastrin, found in Arabidopsis thaliana (Mouse-ear cress).